The primary structure comprises 551 residues: Scaffold protein D13 ortholog (551 aa).

The protein belongs to the poxviridae protein D13 family. Homotrimer. Self-assembles to form a layer. Interacts with A17 (via N-terminus); this interaction is necessary for D13 association with membranes.

Its subcellular location is the membrane. In terms of biological role, scaffold protein which forms a transitory spherical honeycomb lattice providing curvature and rigidity to the convex membrane of crescent and immature virions (IV). This association occurs concomitantly with viral membrane formation. Targeted by the drug rifampicin, which prevents the formation of this lattice, and hence virus morphogenesis. In the presence of rifampicin, irregularly shaped membranes that lack the honeycomb layer accumulate around areas of electron-dense viroplasm. This layer is lost from virions during maturation from IV to mature virion (MV), through the proteolysis of A17 N-terminus. In Sus scrofa (Pig), this protein is Scaffold protein D13 ortholog.